A 2871-amino-acid polypeptide reads, in one-letter code: Fibrillin-1 (2871 aa).

The first 24 residues, 1–24 (MRRGRLLEVALGFTVLLASYTSHR), serve as a signal peptide directing secretion. A propeptide spanning residues 25-44 (AEANLEAGNGKETRASRAKR) is cleaved from the precursor. A compositionally biased stretch (basic and acidic residues) spans 29–39 (LEAGNGKETRA). The segment at 29–49 (LEAGNGKETRASRAKRRGGGG) is disordered. Residues 45–81 (RGGGGHDALKGPNVCGSRYNAYCCPGWKTLPGGNQCI) are fibrillin unique N-terminal (FUN) domain. The N-terminal domain stretch occupies residues 45–450 (RGGGGHDALK…PPRVLPVNVT (406 aa)). 11 disulfide bridges follow: cysteine 59–cysteine 68, cysteine 67–cysteine 80, cysteine 85–cysteine 94, cysteine 89–cysteine 100, cysteine 102–cysteine 111, cysteine 119–cysteine 129, cysteine 123–cysteine 134, cysteine 136–cysteine 145, cysteine 150–cysteine 160, cysteine 154–cysteine 166, and cysteine 168–cysteine 177. 3 EGF-like domains span residues 81 to 112 (IVPI…PSCG), 115 to 146 (SIQH…THCG), and 147 to 178 (QPVC…PQCE). The interaction with MFAP4 stretch occupies residues 119–329 (CNIRCMNGGS…YTSPDGTRCI (211 aa)). Residues 184-236 (GPCFTVVSNQMCQGQLSGIVCTKTLCCATVGRAWGHPCEMCPAQPHPCRRGFI) enclose the TB 1 domain. A hybrid domain 1 region spans residues 195–221 (CQGQLSGIVCTKTLCCATVGRAWGHPC). The region spanning 246 to 287 (DVDECQAIPGLCQGGNCINTVGSFECKCPAGHKFNEVSQKCE) is the EGF-like 4; calcium-binding domain. 6 disulfide bridges follow: cysteine 250/cysteine 262, cysteine 257/cysteine 271, cysteine 273/cysteine 286, cysteine 292/cysteine 304, cysteine 299/cysteine 313, and cysteine 315/cysteine 328. Serine 268 carries O-linked (Glc) serine glycosylation. The region spanning 288 to 329 (DIDECSTIPGICDGGECTNTVSSYFCKCPPGFYTSPDGTRCI) is the EGF-like 5; calcium-binding domain. Positions 334 to 389 (GYCYTALTNGRCSNQLPQSITKMQCCCDVGRCWSPGVTVTPEMCPIRATEDFNKLC) constitute a TB 2 domain. Asparagine 448 is a glycosylation site (N-linked (GlcNAc...) asparagine). The EGF-like 6 domain occupies 449 to 489 (VTDYCQLFRYLCHNGRCIPTPGSYRCECNKGFQLDLRGECI). 15 cysteine pairs are disulfide-bonded: cysteine 453-cysteine 465, cysteine 460-cysteine 474, cysteine 476-cysteine 488, cysteine 494-cysteine 504, cysteine 499-cysteine 513, cysteine 515-cysteine 528, cysteine 534-cysteine 546, cysteine 541-cysteine 555, cysteine 557-cysteine 570, cysteine 576-cysteine 587, cysteine 582-cysteine 596, cysteine 598-cysteine 611, cysteine 617-cysteine 628, cysteine 623-cysteine 637, and cysteine 639-cysteine 652. An O-linked (Glc) serine glycan is attached at serine 471. In terms of domain architecture, EGF-like 7; calcium-binding spans 490–529 (DVDECEKNPCAGGECINNQGSYTCQCRPGYQSTLTRTECR). Serine 510 carries O-linked (Glc) serine glycosylation. Positions 530–571 (DIDECLQNGRICNNGRCINTDGSFHCVCNAGFHVTRDGKNCE) constitute an EGF-like 8; calcium-binding domain. The EGF-like 9; calcium-binding domain occupies 572–612 (DMDECSIRNMCLNGMCINEDGSFKCICKPGFQLASDGRYCK). Residues 613–653 (DINECETSGICMNGRCVNTDGSYRCECFPGLAVGLDGRVCV) enclose the EGF-like 10; calcium-binding domain. The 53-residue stretch at 659 to 711 (STCYGGYKRGQCVKPLFGAVTKSECCCASTEYAFGEPCQPCPSQNSAEYQALC) folds into the TB 3 domain. The EGF-like 11; calcium-binding domain occupies 723 to 764 (DINECALDPDICPNGICENLRGTYKCICNSGYEVDSTGKNCV). Cystine bridges form between cysteine 727/cysteine 739, cysteine 734/cysteine 748, cysteine 750/cysteine 763, cysteine 769/cysteine 781, cysteine 776/cysteine 790, cysteine 792/cysteine 805, cysteine 811/cysteine 821, cysteine 816/cysteine 830, cysteine 832/cysteine 845, cysteine 853/cysteine 875, cysteine 862/cysteine 887, cysteine 876/cysteine 890, cysteine 896/cysteine 908, cysteine 914/cysteine 926, cysteine 921/cysteine 935, and cysteine 937/cysteine 950. One can recognise an EGF-like 12; calcium-binding domain in the interval 765 to 806 (DINECVLNSLLCDNGQCRNTPGSFVCTCPKGFIYKPDLKTCE). The 40-residue stretch at 807-846 (DIDECESSPCINGVCKNSPGSFICECSSESTLDPTKTICI) folds into the EGF-like 13; calcium-binding domain. The TB 4 domain occupies 851–902 (GTCWQTIIDGRCEININGATLKSQCCSSLGAAWGSPCTPCQVDPICGKGYSR). Residues 862–887 (CEININGATLKSQCCSSLGAAWGSPC) are hybrid domain 2. Residues 910–951 (DIDECEVFPGVCKNGLCVNSKGSFKCQCPNGMTLDATGRICL) form the EGF-like 14; calcium-binding domain. A TB 5 domain is found at 956-1008 (ETCFLRYEDEECTLPVVGRHRMDACCCSVGAAWGTEECEECPPRNTPEYEELC). The region spanning 1028 to 1069 (DINECKMIPNLCTHGKCRNTIGSFKCRCDSGFALDSEERNCI) is the EGF-like 15; calcium-binding domain. 43 cysteine pairs are disulfide-bonded: cysteine 1032/cysteine 1044, cysteine 1039/cysteine 1053, cysteine 1055/cysteine 1068, cysteine 1074/cysteine 1086, cysteine 1081/cysteine 1095, cysteine 1097/cysteine 1111, cysteine 1117/cysteine 1129, cysteine 1124/cysteine 1138, cysteine 1140/cysteine 1153, cysteine 1159/cysteine 1171, cysteine 1201/cysteine 1212, cysteine 1208/cysteine 1221, cysteine 1223/cysteine 1236, cysteine 1242/cysteine 1254, cysteine 1249/cysteine 1263, cysteine 1265/cysteine 1278, cysteine 1284/cysteine 1296, cysteine 1291/cysteine 1305, cysteine 1307/cysteine 1320, cysteine 1326/cysteine 1339, cysteine 1333/cysteine 1348, cysteine 1350/cysteine 1361, cysteine 1367/cysteine 1380, cysteine 1374/cysteine 1389, cysteine 1391/cysteine 1402, cysteine 1408/cysteine 1420, cysteine 1415/cysteine 1429, cysteine 1450/cysteine 1461, cysteine 1456/cysteine 1470, cysteine 1472/cysteine 1485, cysteine 1491/cysteine 1502, cysteine 1497/cysteine 1511, cysteine 1513/cysteine 1526, cysteine 1534/cysteine 1562, cysteine 1549/cysteine 1574, cysteine 1563/cysteine 1577, cysteine 1564/cysteine 1589, cysteine 1610/cysteine 1622, cysteine 1617/cysteine 1631, cysteine 1633/cysteine 1646, cysteine 1652/cysteine 1663, cysteine 1658/cysteine 1672, and cysteine 1674/cysteine 1687. Residues 1070 to 1112 (DIDECRISPDLCGRGQCVNTPGDFECKCDEGYESGFMMMKNCM) form the EGF-like 16; calcium-binding domain. The EGF-like 17; calcium-binding domain occupies 1113–1154 (DIDECQRDPLLCRGGVCLNTEGSYRCECPSGHQMSPNISACI). Residue serine 1135 is glycosylated (O-linked (Glc) serine). Asparagine 1149 is a glycosylation site (N-linked (GlcNAc...) asparagine). The 42-residue stretch at 1155 to 1196 (DINECELSAHLCPHGRCVNLIGKYQRARNPGYHSTPDRLFCV) folds into the EGF-like 18; calcium-binding domain. Positions 1197 to 1237 (DIDECSIMNGGCETFCTNSEGSYECSCQPGFALMPDQRSCT) constitute an EGF-like 19; calcium-binding domain. Serine 1218 carries an O-linked (Glc) serine glycan. The EGF-like 20; calcium-binding domain maps to 1238 to 1279 (DIDECEDNPNICDGGQCTNIPGEYRCLCYDGFMASEDMKTCV). Residues 1280-1321 (DVNECDLNPNICLSGTCENTKGSFICHCDMGYSGKKGKTGCT) enclose the EGF-like 21; calcium-binding domain. A glycan (O-linked (Glc) serine) is linked at serine 1302. The EGF-like 22; calcium-binding domain occupies 1322-1362 (DINECEIGAHNCDRHAVCTNTAGSFNCSCSPGWIGDGIKCT). A glycan (O-linked (Glc) serine) is linked at serine 1345. The N-linked (GlcNAc...) asparagine glycan is linked to asparagine 1347. One can recognise an EGF-like 23; calcium-binding domain in the interval 1363–1403 (DLDECSNGTHMCSQHADCKNTMGSYRCLCKEGYTGDGFTCA). N-linked (GlcNAc...) asparagine glycosylation occurs at asparagine 1369. O-linked (Glc) serine glycosylation is present at serine 1386. In terms of domain architecture, EGF-like 24; calcium-binding spans 1404-1445 (DLDECSENVKLCGNVQCLYAPGGYHCEYDMGFVPSADRKSCV). Positions 1446–1486 (DSDECSLPNICVFGTCHNLPGLFRCECEIGYELDRSGGNCT) constitute an EGF-like 25; calcium-binding domain. Asparagine 1484 carries N-linked (GlcNAc...) asparagine glycosylation. An EGF-like 26; calcium-binding domain is found at 1487 to 1527 (DVNECLEPPTCISGNCVNTPGSYTCVCPPDFELNPTRVGCV). O-linked (Glc) serine glycosylation occurs at serine 1508. The segment at 1528 to 2731 (DTRSGNCYLD…GYPKRGRKRR (1204 aa)) is C-terminal domain. Residues 1532-1589 (GNCYLDVRPRGDNGDTACSNEIGVGVSKASCCCSLGKAWGTPCEQCPPVNTSEYKILC) enclose the TB 6 domain. Residues 1541–1543 (RGD) carry the Cell attachment site motif. A glycan (N-linked (GlcNAc...) asparagine) is linked at asparagine 1581. Residues 1606–1647 (DIDECQELPGLCQGGKCINTFGSFQCRCPTGYYLNEDTRVCD) enclose the EGF-like 27; calcium-binding domain. A glycan (O-linked (Glc) serine) is linked at serine 1628. The 41-residue stretch at 1648–1688 (DVNECETPGICGPGTCYNTVGNYTCICPPDYMQVNGGNNCM) folds into the EGF-like 28; calcium-binding domain. Asparagine 1669 carries an N-linked (GlcNAc...) asparagine glycan. A TB 7 domain is found at 1693 to 1748 (SLCYRNYYADNQTCDGELLFNMTKKMCCCSYNIGRAWNKPCEQCPIPSTDEFATLC). 2 N-linked (GlcNAc...) asparagine glycosylation sites follow: asparagine 1703 and asparagine 1713. Residues 1766-1807 (DIDECREIPGVCENGVCINMVGSFRCECPVGFFYNDKLLVCE) enclose the EGF-like 29; calcium-binding domain. Cystine bridges form between cysteine 1770–cysteine 1782, cysteine 1777–cysteine 1791, cysteine 1793–cysteine 1806, cysteine 1812–cysteine 1824, cysteine 1818–cysteine 1833, cysteine 1835–cysteine 1847, cysteine 1853–cysteine 1865, cysteine 1860–cysteine 1874, cysteine 1876–cysteine 1889, cysteine 1895–cysteine 1905, cysteine 1900–cysteine 1914, cysteine 1916–cysteine 1928, cysteine 1934–cysteine 1947, cysteine 1942–cysteine 1956, cysteine 1958–cysteine 1971, cysteine 1977–cysteine 1989, cysteine 1984–cysteine 1998, cysteine 2000–cysteine 2011, cysteine 2017–cysteine 2029, cysteine 2024–cysteine 2038, cysteine 2040–cysteine 2053, cysteine 2061–cysteine 2083, cysteine 2070–cysteine 2096, cysteine 2084–cysteine 2099, cysteine 2085–cysteine 2111, cysteine 2131–cysteine 2142, cysteine 2137–cysteine 2151, cysteine 2153–cysteine 2164, cysteine 2170–cysteine 2181, cysteine 2176–cysteine 2190, cysteine 2192–cysteine 2204, cysteine 2210–cysteine 2221, cysteine 2217–cysteine 2230, cysteine 2232–cysteine 2245, cysteine 2251–cysteine 2265, cysteine 2258–cysteine 2274, cysteine 2276–cysteine 2289, cysteine 2295–cysteine 2307, cysteine 2302–cysteine 2316, and cysteine 2318–cysteine 2331. Residues 1808–1848 (DIDECQNGPVCQRNAECINTAGSYRCDCKPGYRFTSTGQCN) enclose the EGF-like 30; calcium-binding domain. Serine 1830 is a glycosylation site (O-linked (Glc) serine). In terms of domain architecture, EGF-like 31; calcium-binding spans 1849–1890 (DRNECQEIPNICSHGQCIDTVGSFYCLCHTGFKTNADQTMCL). An O-linked (Glc) serine glycan is attached at serine 1871. The region spanning 1891–1929 (DINECERDACGNGTCRNTIGSFNCRCNHGFILSHNNDCI) is the EGF-like 32; calcium-binding domain. Residue asparagine 1902 is glycosylated (N-linked (GlcNAc...) asparagine). Serine 1911 is a glycosylation site (O-linked (Glc) serine). Positions 1930 to 1972 (DVDECATGNGNLCRNGQCINTVGSFQCQCNEGYEVAPDGRTCV) constitute an EGF-like 33; calcium-binding domain. Residue serine 1953 is glycosylated (O-linked (Glc) serine). The region spanning 1973-2012 (DINECLLEPGKCAPGTCQNLDGSYRCICPPGYSLQNDKCE) is the EGF-like 34; calcium-binding domain. The EGF-like 35; calcium-binding domain maps to 2013 to 2054 (DIDECVEEPEICALGTCSNTEGSFKCLCPDGFSLSSTGRRCQ). Serine 2035 carries an O-linked (Glc) serine glycan. In terms of domain architecture, TB 8 spans 2059-2111 (SYCYAKFEGGKCSSPKSRNHSKQECCCALKGEGWGDPCELCPTEPDEAFRQIC). Asparagine 2077 is a glycosylation site (N-linked (GlcNAc...) asparagine). The region spanning 2127-2165 (DMDECKEPDVCKHGQCINTDGSYRCECPFGYILEGNECV) is the EGF-like 36; calcium-binding domain. O-linked (Glc) serine glycosylation occurs at serine 2148. Residues 2166 to 2205 (DTDECSVGNPCGNGTCKNVIGGFECTCEEGFEPGPMMTCE) form the EGF-like 37; calcium-binding domain. The N-linked (GlcNAc...) asparagine glycan is linked to asparagine 2178. Residues 2206 to 2246 (DINECAQNPLLCAFRCVNTYGSYECKCPTGYVLREDRRMCK) enclose the EGF-like 38; calcium-binding domain. O-linked (Glc) serine glycosylation is present at serine 2227. One can recognise an EGF-like 39; calcium-binding domain in the interval 2247–2290 (DEDECEEGKHDCAEKQMECKNLIGMYICICGPGYQRRPDGEGCV). An EGF-like 40; calcium-binding domain is found at 2291 to 2332 (DENECQTKPGICENGRCLNTRGSYTCECNDGFTASPTQDECL). O-linked (Glc) serine glycosylation occurs at serine 2313. Residues 2337-2390 (GYCFTEVLQNMCQIGSSNRNPVTKSECCCDGGRGWGPHCEICPFQGTVAFKKLC) form the TB 9 domain. The EGF-like 41; calcium-binding domain occupies 2402–2443 (DIDECKVIHDVCRNGECINDRGSYHCICKTGYTPDITGTACV). 21 disulfides stabilise this stretch: cysteine 2406/cysteine 2418, cysteine 2413/cysteine 2427, cysteine 2429/cysteine 2442, cysteine 2448/cysteine 2459, cysteine 2455/cysteine 2468, cysteine 2470/cysteine 2483, cysteine 2489/cysteine 2500, cysteine 2496/cysteine 2509, cysteine 2511/cysteine 2522, cysteine 2528/cysteine 2541, cysteine 2535/cysteine 2550, cysteine 2552/cysteine 2565, cysteine 2571/cysteine 2581, cysteine 2577/cysteine 2590, cysteine 2592/cysteine 2605, cysteine 2611/cysteine 2622, cysteine 2617/cysteine 2631, cysteine 2633/cysteine 2646, cysteine 2652/cysteine 2663, cysteine 2659/cysteine 2672, and cysteine 2674/cysteine 2686. An EGF-like 42; calcium-binding domain is found at 2444 to 2484 (DLNECNQAPKPCNFICKNTEGSYQCSCPKGYILQEDGRSCK). Serine 2465 carries an O-linked (Glc) serine glycan. Positions 2485 to 2523 (DLDECATKQHNCQFLCVNTIGSFACKCPPGFTQHHTACI) constitute an EGF-like 43; calcium-binding domain. The region spanning 2524 to 2566 (DNNECTSDINLCGAKGICQNTPGSFTCECQRGFSLDQSGASCE) is the EGF-like 44; calcium-binding domain. A glycan (O-linked (Glc) serine) is linked at serine 2547. In terms of domain architecture, EGF-like 45; calcium-binding spans 2567–2606 (DVDECEGNHRCQHGCQNIIGGYRCSCPQGYLQHYQWNQCV). The EGF-like 46; calcium-binding domain occupies 2607–2647 (DENECLSAHICGGASCHNTLGSYKCMCPAGFQYEQFSGGCQ). A glycan (O-linked (Glc) serine) is linked at serine 2628. The region spanning 2648–2687 (DINECGSSQAPCSYGCSNTEGGYLCGCPPGYFRIGQGHCV) is the EGF-like 47; calcium-binding domain. 2 positions are modified to phosphoserine: serine 2702 and serine 2709. Residues asparagine 2734, asparagine 2750, and asparagine 2767 are each glycosylated (N-linked (GlcNAc...) asparagine).

It belongs to the fibrillin family. In terms of assembly, interacts with COL16A1. Interacts with integrin alpha-V/beta-3. Interacts with ADAMTS10; this interaction promotes microfibril assembly. Interacts with THSD4; this interaction promotes fibril formation. Interacts (via N-terminal domain) with FBLN2 and FBLN5. Interacts with ELN. Forms a ternary complex with ELN and FBLN2 or FBLN5 and a significant interaction with ELN seen only in the presence of FBLN2 or FBLN5. Interacts (via N-terminal domain) with LTBP2 (via C-terminal domain) in a Ca(+2)-dependent manner. Interacts (via N-terminal domain) with LTBP1 (via C-terminal domain). Interacts with integrins ITGA5:ITGB1, ITGAV:ITGB3 and ITGAV:ITGB6. Interacts (via N-terminal domain) with BMP2, BMP4, BMP7, BMP10 and GDF5. Interacts (via N-terminal domain) with MFAP2 and MFAP5. Interacts with ADAMTSL5. Interacts with MFAP4. Interacts (via N-terminal domain) with TNFSF11 in a Ca(+2)-dependent manner. Interacts (via N-terminal domain) with EFEMP2; this interaction inhibits EFEMP2 binding to LOX and ELN. In terms of processing, cleavage of N- and C-terminus by furin is required for incorporation into the extracellular matrix and assembly into microfibrils. The C-terminus, which corresponds to the Asprosin chain, was initially thought to constitute a propeptide. Fibrillin-1 and Asprosin chains are still linked together during the secretion from cells, but are subsequently separated by furin, an essential step for incorporation of Fibrillin-1 into the nascent microfibrils. Forms intermolecular disulfide bonds either with other fibrillin-1 molecules or with other components of the microfibrils. Post-translationally, O-glycosylated on serine residues by POGLUT2 and POGLUT3 which is necessary for efficient protein secretion.

Its subcellular location is the secreted. It is found in the extracellular space. The protein localises to the extracellular matrix. Structural component of the 10-12 nm diameter microfibrils of the extracellular matrix, which conveys both structural and regulatory properties to load-bearing connective tissues. Fibrillin-1-containing microfibrils provide long-term force bearing structural support. In tissues such as the lung, blood vessels and skin, microfibrils form the periphery of the elastic fiber, acting as a scaffold for the deposition of elastin. In addition, microfibrils can occur as elastin-independent networks in tissues such as the ciliary zonule, tendon, cornea and glomerulus where they provide tensile strength and have anchoring roles. Fibrillin-1 also plays a key role in tissue homeostasis through specific interactions with growth factors, such as the bone morphogenetic proteins (BMPs), growth and differentiation factors (GDFs) and latent transforming growth factor-beta-binding proteins (LTBPs), cell-surface integrins and other extracellular matrix protein and proteoglycan components. Regulates osteoblast maturation by controlling TGF-beta bioavailability and calibrating TGF-beta and BMP levels, respectively. Negatively regulates osteoclastogenesis by binding and sequestering an osteoclast differentiation and activation factor TNFSF11. This leads to disruption of TNFSF11-induced Ca(2+) signaling and impairment of TNFSF11-mediated nuclear translocation and activation of transcription factor NFATC1 which regulates genes important for osteoclast differentiation and function. Mediates cell adhesion via its binding to cell surface receptors integrins ITGAV:ITGB3 and ITGA5:ITGB1. Binds heparin and this interaction plays an important role in the assembly of microfibrils. Functionally, hormone that targets the liver to increase plasma glucose levels. Secreted by white adipose tissue and circulates in the plasma. Acts in response to fasting and promotes blood glucose elevation by binding to the surface of hepatocytes. Promotes hepatocyte glucose release by activating the protein kinase A activity in the liver, resulting in rapid glucose release into the circulation. This is Fibrillin-1 from Sus scrofa (Pig).